The sequence spans 143 residues: 3-dehydroquinate dehydratase (143 aa).

Residue Y22 is the Proton acceptor of the active site. Substrate-binding residues include N73, H79, and D86. Residue H99 is the Proton donor of the active site. Substrate is bound by residues 100–101 (IS) and R110.

It belongs to the type-II 3-dehydroquinase family. Homododecamer.

The catalysed reaction is 3-dehydroquinate = 3-dehydroshikimate + H2O. The protein operates within metabolic intermediate biosynthesis; chorismate biosynthesis; chorismate from D-erythrose 4-phosphate and phosphoenolpyruvate: step 3/7. Functionally, catalyzes a trans-dehydration via an enolate intermediate. This is 3-dehydroquinate dehydratase from Mycobacterium avium (strain 104).